The chain runs to 424 residues: Glutamyl-tRNA(Gln) amidotransferase subunit D (424 aa).

The tract at residues 56–78 (GETANGSRNGGKGCKTNEEELPE) is disordered. An Asparaginase/glutaminase domain is found at 84-413 (PKIAILSTGG…EKAAGMLRED (330 aa)). Residues threonine 94, threonine 170, aspartate 171, and lysine 247 contribute to the active site.

Belongs to the asparaginase 1 family. GatD subfamily. In terms of assembly, heterodimer of GatD and GatE.

It carries out the reaction L-glutamyl-tRNA(Gln) + L-glutamine + ATP + H2O = L-glutaminyl-tRNA(Gln) + L-glutamate + ADP + phosphate + H(+). Functionally, allows the formation of correctly charged Gln-tRNA(Gln) through the transamidation of misacylated Glu-tRNA(Gln) in organisms which lack glutaminyl-tRNA synthetase. The reaction takes place in the presence of glutamine and ATP through an activated gamma-phospho-Glu-tRNA(Gln). The GatDE system is specific for glutamate and does not act on aspartate. In Methanosarcina acetivorans (strain ATCC 35395 / DSM 2834 / JCM 12185 / C2A), this protein is Glutamyl-tRNA(Gln) amidotransferase subunit D.